The following is a 209-amino-acid chain: Large ribosomal subunit protein uL4 (209 aa).

Residues 50–89 (MTKTKGLVSGGGKKPFKQKGTGGARQGSSRSILMPGGGTA) form a disordered region.

It belongs to the universal ribosomal protein uL4 family. As to quaternary structure, part of the 50S ribosomal subunit.

Functionally, one of the primary rRNA binding proteins, this protein initially binds near the 5'-end of the 23S rRNA. It is important during the early stages of 50S assembly. It makes multiple contacts with different domains of the 23S rRNA in the assembled 50S subunit and ribosome. In terms of biological role, forms part of the polypeptide exit tunnel. This Bdellovibrio bacteriovorus (strain ATCC 15356 / DSM 50701 / NCIMB 9529 / HD100) protein is Large ribosomal subunit protein uL4.